The primary structure comprises 363 residues: Peroxisomal (S)-2-hydroxyacid oxidase GLO3 (363 aa).

The 357-residue stretch at 1–357 (MDQIVNVDEF…TRNHVRTENE (357 aa)) folds into the FMN hydroxy acid dehydrogenase domain. Residues 78–80 (PTG), Ser-107, 128–130 (QIY), and Thr-156 each bind FMN. Residue Tyr-130 participates in a 2-oxocarboxylate binding. Arg-165 contacts a 2-oxocarboxylate. Residues Lys-228 and Ser-250 each contribute to the FMN site. The active-site Proton acceptor is the His-252. Residue Arg-255 coordinates a 2-oxocarboxylate. Residues 283–287 (DGGVR) and 306–307 (GR) contribute to the FMN site. The Microbody targeting signal motif lies at 361–363 (SML).

Belongs to the FMN-dependent alpha-hydroxy acid dehydrogenase family. In terms of assembly, homotetramer. FMN serves as cofactor.

Its subcellular location is the peroxisome. It carries out the reaction a (2S)-2-hydroxycarboxylate + O2 = a 2-oxocarboxylate + H2O2. The enzyme catalyses 2-hydroxy-4-methylpentanoate + O2 = 4-methyl-2-oxopentanoate + H2O2. It catalyses the reaction 2-hydroxyhexanoate + O2 = 2-oxohexanoate + H2O2. The catalysed reaction is 2-hydroxyoctanoate + O2 = 2-oxooctanoate + H2O2. Functionally, oxidase that catalyzes the oxidation of a broad range of 2-hydroxyacids to the corresponding 2-oxoacids, with a reduction of O2 to H2O2. Displays the highest activity with leucic acid (2-hydroxy-4-methylpentanoate) and has intermediate activity with 2-hydroxyhexanoate and 2-hydroxyoctanote. Shows lower activity with 2-hydroxydodecanoate, valic acid, and isoleucic acid and extremely low activity with glycolate and L-lactate. Cannot use 2-hydroxyhexadecanoate or D-lactate as substrates. May be involved in the conversion or degradation of 2-hydroxyacids produced during the metabolism of fatty acids or amino acids. This chain is Peroxisomal (S)-2-hydroxyacid oxidase GLO3 (GLO3), found in Arabidopsis thaliana (Mouse-ear cress).